We begin with the raw amino-acid sequence, 478 residues long: Solute carrier family 2, facilitated glucose transporter member 8 (478 aa).

Residues 1-20 (MTPEDQEETQPLLRPPGGSA) are disordered. The Cytoplasmic portion of the chain corresponds to 1-25 (MTPEDQEETQPLLRPPGGSAPRGRR). Low complexity predominate over residues 11–20 (PLLRPPGGSA). Positions 12–13 (LL) match the Dileucine internalization motif motif. Residues 26–46 (VFLAAFAAALGPLSFGFALGY) traverse the membrane as a helical segment. Residues 47-70 (SSPAIPSLRRAAPPAPHLDEDAAS) lie on the Extracellular side of the membrane. The chain crosses the membrane as a helical span at residues 71–91 (WFGAIVTLGAAAGGVLGGWLL). Over 92–97 (DRAGRK) the chain is Cytoplasmic. A helical membrane pass occupies residues 98-118 (LSLVLCALPFVAGFAVITAAQ). Residues 119 to 127 (NLWMLLGGR) lie on the Extracellular side of the membrane. A helical membrane pass occupies residues 128 to 148 (LLTGLACGIASLVAPVYISEI). Residues 149 to 158 (AYPEVRGLLG) lie on the Cytoplasmic side of the membrane. The helical transmembrane segment at 159-179 (SCVQLMVVTGILLAYLAGWVL) threads the bilayer. D-glucose is bound at residue glutamine 162. Residues 180-182 (EWR) are Extracellular-facing. A helical transmembrane segment spans residues 183–203 (WLAVLGCVPPSFMLLLMCFMP). The Cytoplasmic segment spans residues 204 to 257 (ETPRFLLSQHKHQEAMAAMQFLWGYAQGWEEPPLGAQHQDFHVAQLRRPGVYKP). A helical transmembrane segment spans residues 258–278 (FIIGISLMAFQQLSGVNAVMF). D-glucose is bound by residues 268–269 (QQ) and asparagine 274. At 279–293 (YAETIFEEAKFKDSS) the chain is on the extracellular side. Residues 294–314 (LASVVVGVIQVLFTATAALIM) form a helical membrane-spanning segment. At 315 to 320 (DRAGRR) the chain is on the cytoplasmic side. A helical transmembrane segment spans residues 321 to 341 (LLLTLSGVVMVFSTSAFGTYF). The Extracellular portion of the chain corresponds to 342-368 (KLTEGGPSNSSHVDLPALVSMEAADTN). A glycan (N-linked (GlcNAc...) asparagine) is linked at asparagine 350. A helical transmembrane segment spans residues 369 to 389 (VGLAWLAVGSMCLFIAGFAVG). Over 390-405 (WGPIPWLLMSEIFPLH) the chain is Cytoplasmic. Tryptophan 395 contributes to the D-glucose binding site. A helical transmembrane segment spans residues 406-426 (VKGVATGVCVLTNWFMAFLVT). At 427–439 (KEFSSLMEVLRPY) the chain is on the extracellular side. A helical membrane pass occupies residues 440–460 (GAFWLASAFCIFGVLFTLACV). Residues 461-478 (PETKGKTLEQITAHFEGR) lie on the Cytoplasmic side of the membrane.

It belongs to the major facilitator superfamily. Sugar transporter (TC 2.A.1.1) family. Glucose transporter subfamily. As to quaternary structure, interacts with AP2B1. In terms of tissue distribution, abundantly expressed in testis and more moderately in lung, kidney, spleen, intestine, skeletal muscle, liver and mammary gland.

The protein localises to the cell membrane. Its subcellular location is the cytoplasmic vesicle membrane. The enzyme catalyses D-glucose(out) = D-glucose(in). It carries out the reaction D-fructose(out) = D-fructose(in). The catalysed reaction is L-dehydroascorbate(out) = L-dehydroascorbate(in). It catalyses the reaction alpha,alpha-trehalose(in) = alpha,alpha-trehalose(out). With respect to regulation, inhibited by cytochalasin B. Functionally, insulin-regulated facilitative hexose transporter that mediates the transport of glucose and fructose. Facilitates hepatic influx of dietary trehalose, which in turn inhibits glucose and fructose influx triggering a starvation signal and hepatic autophagy through activation of AMPK and ULK1. Also able to mediate the transport of dehydroascorbate. This chain is Solute carrier family 2, facilitated glucose transporter member 8, found in Bos taurus (Bovine).